Consider the following 88-residue polypeptide: Phosphocarrier protein HPr (88 aa).

The region spanning 1 to 88 (MAQKTFTVTA…DTMSKEGLGE (88 aa)) is the HPr domain. The residue at position 12 (Ser-12) is a Phosphoserine. Residue His-15 is the Pros-phosphohistidine intermediate of the active site. Ser-46 is modified (phosphoserine; by HPrK/P).

Belongs to the HPr family.

It localises to the cytoplasm. With respect to regulation, phosphorylation on Ser-46 inhibits the phosphoryl transfer from enzyme I to HPr. In terms of biological role, general (non sugar-specific) component of the phosphoenolpyruvate-dependent sugar phosphotransferase system (sugar PTS). This major carbohydrate active-transport system catalyzes the phosphorylation of incoming sugar substrates concomitantly with their translocation across the cell membrane. The phosphoryl group from phosphoenolpyruvate (PEP) is transferred to the phosphoryl carrier protein HPr by enzyme I. Phospho-HPr then transfers it to the PTS EIIA domain. P-Ser-HPr interacts with the catabolite control protein A (CcpA), forming a complex that binds to DNA at the catabolite response elements cre, operator sites preceding a large number of catabolite-regulated genes. Thus, P-Ser-HPr is a corepressor in carbon catabolite repression (CCR), a mechanism that allows bacteria to coordinate and optimize the utilization of available carbon sources. P-Ser-HPr also plays a role in inducer exclusion, in which it probably interacts with several non-PTS permeases and inhibits their transport activity. This Priestia megaterium (Bacillus megaterium) protein is Phosphocarrier protein HPr (ptsH).